We begin with the raw amino-acid sequence, 737 residues long: UPF0507 protein YML002W (737 aa).

Residues 1-83 (MDSHQLELPD…FEDFNKNTGN (83 aa)) form the VPS9 domain.

It belongs to the UPF0507 family.

This chain is UPF0507 protein YML002W, found in Saccharomyces cerevisiae (strain ATCC 204508 / S288c) (Baker's yeast).